Reading from the N-terminus, the 317-residue chain is MALENLLHPTNIKIDEYAKNATKFSFEALERGVGYTLGFALKQTMLYSIAGACVTSIKINDGKVTSLEDVIPCDETVADIILNVKSLSVTLAEDVETGTITFELSGSEEEIFSEEAKLSEGLAITEEVFICSYNGGKKLKIEAKVEKGVGFRPAQDNFKDCEFLLDATFSPVVFCDFEIKDARVGRRTDLDKLELNIKTNGNVNCEEALRLAATKIQNQLRNIVDIEEINKGIFVEDPKDINPILLKHVEELNLTARSSNCLKAVNIRLIGELVQKTENELLKAPNFGKKSLTEIKDKLSELGLSLGTLIENWPQDL.

An alpha N-terminal domain (alpha-NTD) region spans residues 1–227; it reads MALENLLHPT…NQLRNIVDIE (227 aa). Positions 241–317 are alpha C-terminal domain (alpha-CTD); that stretch reads INPILLKHVE…TLIENWPQDL (77 aa).

Belongs to the RNA polymerase alpha chain family. As to quaternary structure, homodimer. The RNAP catalytic core consists of 2 alpha, 1 beta, 1 beta' and 1 omega subunit. When a sigma factor is associated with the core the holoenzyme is formed, which can initiate transcription.

It catalyses the reaction RNA(n) + a ribonucleoside 5'-triphosphate = RNA(n+1) + diphosphate. In terms of biological role, DNA-dependent RNA polymerase catalyzes the transcription of DNA into RNA using the four ribonucleoside triphosphates as substrates. In Francisella tularensis subsp. holarctica (strain FTNF002-00 / FTA), this protein is DNA-directed RNA polymerase subunit alpha 2.